The sequence spans 79 residues: Large ribosomal subunit protein bL31 (79 aa).

It belongs to the bacterial ribosomal protein bL31 family. Type A subfamily. In terms of assembly, part of the 50S ribosomal subunit.

Functionally, binds the 23S rRNA. The protein is Large ribosomal subunit protein bL31 of Nostoc sp. (strain PCC 7120 / SAG 25.82 / UTEX 2576).